Consider the following 152-residue polypeptide: UPF0266 membrane protein KPN78578_23010 (152 aa).

The next 3 membrane-spanning stretches (helical) occupy residues 6–26 (LVIILFILALLAYAIYDQFIM), 45–65 (VDGMIFVGLTAILIYNNITQH), and 67–87 (TAITTWLLSVLALMGLYLFWI).

Belongs to the UPF0266 family.

The protein localises to the cell inner membrane. The polypeptide is UPF0266 membrane protein KPN78578_23010 (Klebsiella pneumoniae subsp. pneumoniae (strain ATCC 700721 / MGH 78578)).